A 368-amino-acid chain; its full sequence is tRNA(Met) cytidine acetate ligase (368 aa).

ATP-binding positions include 7–20 (IAEFNPFHNGHKYL), glycine 96, asparagine 152, and arginine 175.

It belongs to the TmcAL family.

Its subcellular location is the cytoplasm. It carries out the reaction cytidine(34) in elongator tRNA(Met) + acetate + ATP = N(4)-acetylcytidine(34) in elongator tRNA(Met) + AMP + diphosphate. Its function is as follows. Catalyzes the formation of N(4)-acetylcytidine (ac(4)C) at the wobble position of elongator tRNA(Met), using acetate and ATP as substrates. First activates an acetate ion to form acetyladenylate (Ac-AMP) and then transfers the acetyl group to tRNA to form ac(4)C34. The sequence is that of tRNA(Met) cytidine acetate ligase from Streptococcus pyogenes serotype M28 (strain MGAS6180).